The chain runs to 268 residues: Undecaprenyl-diphosphatase (268 aa).

Helical transmembrane passes span 47 to 67 (FAVLIQLGAILAILALYFSKL), 85 to 105 (IGVLVAFLPAAVIGAASGGLI), 109 to 129 (LFNPWVVCFTLILGGGILLWV), 144 to 164 (FPLPMYLIIGFAQCIAMFPGV), 184 to 204 (AAEFSFFLAIPTMLGAFVYDL), 217 to 237 (LIVAVGFAVSFITAIIVVKTF), and 246 to 266 (FALFAWWRVIVGTLGLIALAL).

It belongs to the UppP family.

It is found in the cell inner membrane. It catalyses the reaction di-trans,octa-cis-undecaprenyl diphosphate + H2O = di-trans,octa-cis-undecaprenyl phosphate + phosphate + H(+). Functionally, catalyzes the dephosphorylation of undecaprenyl diphosphate (UPP). Confers resistance to bacitracin. This chain is Undecaprenyl-diphosphatase, found in Rhodopseudomonas palustris (strain BisA53).